A 484-amino-acid polypeptide reads, in one-letter code: UDP-N-acetylmuramate--L-alanine ligase (484 aa).

Position 126 to 132 (126 to 132) interacts with ATP; it reads GTHGKTT.

Belongs to the MurCDEF family.

It is found in the cytoplasm. It carries out the reaction UDP-N-acetyl-alpha-D-muramate + L-alanine + ATP = UDP-N-acetyl-alpha-D-muramoyl-L-alanine + ADP + phosphate + H(+). It participates in cell wall biogenesis; peptidoglycan biosynthesis. In terms of biological role, cell wall formation. In Tolumonas auensis (strain DSM 9187 / NBRC 110442 / TA 4), this protein is UDP-N-acetylmuramate--L-alanine ligase.